A 306-amino-acid polypeptide reads, in one-letter code: UDP-N-acetylenolpyruvoylglucosamine reductase (306 aa).

The 166-residue stretch at 28–193 folds into the FAD-binding PCMH-type domain; the sequence is KVGGPADFLA…VSAKFSLKPG (166 aa). Arginine 172 is an active-site residue. The active-site Proton donor is the serine 222. Glutamate 292 is a catalytic residue.

It belongs to the MurB family. FAD is required as a cofactor.

The protein localises to the cytoplasm. It carries out the reaction UDP-N-acetyl-alpha-D-muramate + NADP(+) = UDP-N-acetyl-3-O-(1-carboxyvinyl)-alpha-D-glucosamine + NADPH + H(+). It participates in cell wall biogenesis; peptidoglycan biosynthesis. Functionally, cell wall formation. The protein is UDP-N-acetylenolpyruvoylglucosamine reductase of Streptococcus mutans serotype c (strain ATCC 700610 / UA159).